A 105-amino-acid chain; its full sequence is Small ribosomal subunit protein uS10 (105 aa).

The protein belongs to the universal ribosomal protein uS10 family. Part of the 30S ribosomal subunit.

In terms of biological role, involved in the binding of tRNA to the ribosomes. This is Small ribosomal subunit protein uS10 from Trichormus variabilis (strain ATCC 29413 / PCC 7937) (Anabaena variabilis).